A 148-amino-acid chain; its full sequence is DNA-directed RNA polymerase II subunit GRINL1A, isoforms 4/5 (148 aa).

The interval M1 to V66 is disordered. The segment covering G53–V66 has biased composition (low complexity).

In Homo sapiens (Human), this protein is DNA-directed RNA polymerase II subunit GRINL1A, isoforms 4/5 (POLR2M).